The sequence spans 86 residues: Muscarinic toxin 2 (86 aa).

Residues 1–21 (MKTLLLTLVVVTIVCLDLGYT) form the signal peptide. Intrachain disulfides connect Cys-24-Cys-45, Cys-38-Cys-63, Cys-67-Cys-78, and Cys-79-Cys-84.

This sequence belongs to the three-finger toxin family. Short-chain subfamily. Aminergic toxin sub-subfamily. In terms of assembly, monomer. As to expression, expressed by the venom gland.

The protein resides in the secreted. Functionally, binds irreversibly to M1 (CHRM1) muscarinic acetylcholine receptors, and reveals a slightly weaker effect on M3 (CHRM3) receptors. The mechanism of toxin-receptor interaction comprises at least two steps. The first step is fast with no competition between the toxin and the antagonist. The second step is slow with formation of a more stable toxin-receptor complex and inhibition of the antagonist binding. This Dendroaspis angusticeps (Eastern green mamba) protein is Muscarinic toxin 2.